Here is a 138-residue protein sequence, read N- to C-terminus: ATP synthase subunit g, mitochondrial (138 aa).

The protein belongs to the ATPase g subunit family. In terms of assembly, F-type ATP synthases have 2 components, the catalytic core F(1) and the membrane-embedded component F(0), linked together by a central stalk and a peripheral stalk. The central stalk, also called rotor shaft, is often seen as part of F(1). The peripheral stalk is seen as part of F(0). F(0) contains the membrane channel next to the rotor. F-type ATP synthases form dimers but each monomer functions independently in ATP generation. The dimer consists of 17 different polypeptides: ATP1 (subunit alpha, 3 molecules per monomer, part of F(1)), ATP2 (subunit beta, 3 copies per monomer, part of F(1)), ATP3 (subunit gamma, part of the central stalk), ATP4 (subunit b, part of the peripheral stalk), ATP5/OSCP (subunit 5/OSCP, part of the peripheral stalk), ATP6 (subunit a, part of the peripheral stalk), ATP7 (subunit d, part of the peripheral stalk), ATP8 (subunit 8, part of the peripheral stalk), OLI1 (subunit c, part of the rotor, 10 molecules per monomer), ATP14 (subunit h, part of the peripheral stalk), ATP15 (subunit epsilon, part of the central stalk), ATP16 (subunit delta, part of the central stalk), ATP17 (subunit f, part of the peripheral stalk), ATP18 (subunit i/j, part of the peripheral stalk), ATP19 (subunit k, dimer-specific, at interface between monomers), ATP20 (subunit g, at interface between monomers), TIM11 (subunit e, at interface between monomers).

It is found in the mitochondrion inner membrane. Its function is as follows. Mitochondrial membrane ATP synthase (F(1)F(0) ATP synthase or Complex V) produces ATP from ADP in the presence of a proton gradient across the membrane which is generated by electron transport complexes of the respiratory chain. F-type ATP synthases consist of two structural domains, F(1) - containing the extramembraneous catalytic core, and F(0) - containing the membrane proton channel, linked together by a central stalk and a peripheral stalk. During catalysis, ATP synthesis in the catalytic domain of F(1) is coupled via a rotary mechanism of the central stalk subunits to proton translocation. Part of the complex F(0) domain. Minor subunit located with subunit a/ATP6 in the membrane. Together with subunit e/TIM11, probably contributes to membrane curvature at the site of the ATP synthase dimer, ultimately contributing to formation of cristae. In Yarrowia lipolytica (strain CLIB 122 / E 150) (Yeast), this protein is ATP synthase subunit g, mitochondrial.